The chain runs to 287 residues: Troponin T, cardiac muscle (287 aa).

Acidic residues-rich tracts occupy residues 1–31 and 44–59; these read MSDV…EEAG and EDGE…DGPV. Disordered regions lie at residues 1–85 and 124–208; these read MSDV…GERV and KDRI…EKKK. An N-acetylserine modification is found at S2. S2 carries the phosphoserine; by CK2 modification. Positions 66–79 are enriched in pro residues; it reads APGPFMPNLVPPKI. Basic and acidic residues-rich tracts occupy residues 124 to 173 and 192 to 208; these read KDRI…DEAR and QAER…EKKK. S197 bears the Phosphoserine; by PKC/PRKCA mark. T202 is subject to Phosphothreonine; by PKC/PRKCA and RAF1. T283 is subject to Phosphothreonine; by PKC/PRKCA.

It belongs to the troponin T family. Post-translationally, phosphorylation at Thr-202 by PRKCA induces significant reduction in myofilament calcium sensitivity and actomyosin ATPase activity.

In terms of biological role, troponin T is the tropomyosin-binding subunit of troponin, the thin filament regulatory complex which confers calcium-sensitivity to striated muscle actomyosin ATPase activity. This is Troponin T, cardiac muscle (TNNT2) from Ovis aries (Sheep).